Consider the following 489-residue polypeptide: Transmembrane protein 161A (489 aa).

The signal sequence occupies residues 1–23; it reads MAVMGIQMVVTLLVASLMQRVSP. Topologically, residues 24-98 are extracellular; sequence HYSFGRWLLC…INTMDALVLR (75 aa). N-linked (GlcNAc...) asparagine glycosylation occurs at N34. A helical transmembrane segment spans residues 99–119; sequence YFLEYQWFIDFALYSTIIYLF. The Cytoplasmic portion of the chain corresponds to 120 to 134; the sequence is TEAYYCVVDAQNEIN. Residues 135–155 traverse the membrane as a helical segment; the sequence is IGVLWCLMSIIFSIKVLFTVM. The Extracellular segment spans residues 156-166; sequence KHYFRSEEGGE. A helical membrane pass occupies residues 167 to 187; that stretch reads RSVCMTFAFFFLLIAMIVTIV. Residues 188–224 lie on the Cytoplasmic side of the membrane; sequence RDEYLEFGLEPGLASVCHNLENFLAQQGWQWSMPFVK. The chain crosses the membrane as a helical span at residues 225 to 245; sequence LAFKIALVALCAFLGGCLTFP. Topologically, residues 246–264 are extracellular; the sequence is GLRLAQTHLDALKMAADRP. Residues 265–285 traverse the membrane as a helical segment; that stretch reads MLQLLLHMSFLPPVIVVVLWI. At 286–304 the chain is on the cytoplasmic side; it reads RPITRDFLLNAPMGKESVE. A helical membrane pass occupies residues 305–325; it reads LMSNSAYNTFRLWIIVLLCLL. Over 326 to 370 the chain is Extracellular; the sequence is RFCLTRFHLQAYLCLADRWVEQMKREAGRISMLEIQRKISRIFCY. Residues 371–391 form a helical membrane-spanning segment; that stretch reads LTVVALQYLAPVILTFHCVFM. At 392–459 the chain is on the cytoplasmic side; that stretch reads LKSLGDYSWG…GLFTPLFFRG (68 aa). The disordered stretch occupies residues 413–432; it reads VDSSPVQSHSPTSEEEEDTE. A helical transmembrane segment spans residues 460 to 480; that stretch reads IFSFLTWWVSVCQIITSLFGL. The Extracellular segment spans residues 481-489; it reads YFHQYLGAS.

It belongs to the TMEM161 family.

Its subcellular location is the membrane. May play a role in protection against oxidative stress. The protein is Transmembrane protein 161A (tmem161a) of Xenopus laevis (African clawed frog).